Consider the following 382-residue polypeptide: Mannitol-1-phosphate 5-dehydrogenase (382 aa).

Residue 3–14 (ALHFGAGNIGRG) participates in NAD(+) binding. N6-acetyllysine is present on K269.

It belongs to the mannitol dehydrogenase family.

The catalysed reaction is D-mannitol 1-phosphate + NAD(+) = beta-D-fructose 6-phosphate + NADH + H(+). In Escherichia coli O139:H28 (strain E24377A / ETEC), this protein is Mannitol-1-phosphate 5-dehydrogenase.